The sequence spans 193 residues: D-alanyl-D-alanine dipeptidase (193 aa).

2 residues coordinate Zn(2+): His98 and Asp105. Glu162 serves as the catalytic Proton donor/acceptor. A Zn(2+)-binding site is contributed by His165.

This sequence belongs to the peptidase M15D family. It depends on Zn(2+) as a cofactor.

The protein localises to the cytoplasm. It catalyses the reaction D-alanyl-D-alanine + H2O = 2 D-alanine. In terms of biological role, catalyzes hydrolysis of the D-alanyl-D-alanine dipeptide. May have a role in cell-wall turnover. This Escherichia coli (strain K12) protein is D-alanyl-D-alanine dipeptidase.